Reading from the N-terminus, the 92-residue chain is Small ribosomal subunit protein uS19c (92 aa).

The protein belongs to the universal ribosomal protein uS19 family.

It localises to the plastid. The protein localises to the chloroplast. Protein S19 forms a complex with S13 that binds strongly to the 16S ribosomal RNA. The chain is Small ribosomal subunit protein uS19c from Lobularia maritima (Sweet alyssum).